The following is a 390-amino-acid chain: LIM/homeobox protein Lhx4 (390 aa).

LIM zinc-binding domains lie at Pro28–Thr87 and Lys88–Asn150. The segment at residues Ala157–Lys216 is a DNA-binding region (homeobox). Positions Arg161–Lys181 are interaction with DNA. An interaction with 5-mCpG DNA region spans residues Arg199–Lys211. 2 disordered regions span residues Ser230 to Asp253 and Ala356 to Phe390.

The protein resides in the nucleus. In terms of biological role, may play a critical role in the development of respiratory control mechanisms and in the normal growth and maturation of the lung. Binds preferentially to methylated DNA. The polypeptide is LIM/homeobox protein Lhx4 (LHX4) (Homo sapiens (Human)).